A 248-amino-acid chain; its full sequence is 26.2 kDa heat shock protein, mitochondrial (248 aa).

The N-terminal 32 residues, 1–32 (MASTVALKGRPLATLLRQLLAADAPPAATGRP), are a transit peptide targeting the mitochondrion. The segment at 26–48 (PAATGRPVAAAPAASGKPVTAPA) is disordered. A sHSP domain is found at 139 to 248 (ATAAARRGGW…RKDVFQVNVE (110 aa)).

The protein belongs to the small heat shock protein (HSP20) family. As to quaternary structure, may form oligomeric structures.

The protein resides in the mitochondrion. This chain is 26.2 kDa heat shock protein, mitochondrial (HSP26.2), found in Oryza sativa subsp. japonica (Rice).